The sequence spans 175 residues: ATP-dependent protease subunit HslV (175 aa).

Residue Thr-2 is part of the active site. Residues Gly-157, Cys-160, and Thr-163 each contribute to the Na(+) site.

The protein belongs to the peptidase T1B family. HslV subfamily. In terms of assembly, a double ring-shaped homohexamer of HslV is capped on each side by a ring-shaped HslU homohexamer. The assembly of the HslU/HslV complex is dependent on binding of ATP.

It localises to the cytoplasm. The catalysed reaction is ATP-dependent cleavage of peptide bonds with broad specificity.. With respect to regulation, allosterically activated by HslU binding. Its function is as follows. Protease subunit of a proteasome-like degradation complex believed to be a general protein degrading machinery. The sequence is that of ATP-dependent protease subunit HslV from Photobacterium profundum (strain SS9).